We begin with the raw amino-acid sequence, 377 residues long: D-alanine--D-alanine ligase (377 aa).

The ATP-grasp domain maps to 140-349; the sequence is KELLTVNNIR…NVELVDKLID (210 aa). 170-225 provides a ligand contact to ATP; the sequence is VKDLGDVVFVKAANQGSSVGVSRAKTADEFEAALTDSFQYDYKVLIEAAVKGPREL. Positions 303, 316, and 318 each coordinate Mg(2+).

This sequence belongs to the D-alanine--D-alanine ligase family. The cofactor is Mg(2+). It depends on Mn(2+) as a cofactor.

The protein localises to the cytoplasm. It carries out the reaction 2 D-alanine + ATP = D-alanyl-D-alanine + ADP + phosphate + H(+). It participates in cell wall biogenesis; peptidoglycan biosynthesis. Functionally, cell wall formation. This Leuconostoc citreum (strain KM20) protein is D-alanine--D-alanine ligase.